A 695-amino-acid polypeptide reads, in one-letter code: Biosynthetic arginine decarboxylase 1 (695 aa).

An N6-(pyridoxal phosphate)lysine modification is found at Lys141. A substrate-binding site is contributed by 332-342 (LDVGGGLGVDY).

This sequence belongs to the Orn/Lys/Arg decarboxylase class-II family. SpeA subfamily. Requires Mg(2+) as cofactor. Pyridoxal 5'-phosphate serves as cofactor.

It carries out the reaction L-arginine + H(+) = agmatine + CO2. Catalyzes the biosynthesis of agmatine from arginine. The polypeptide is Biosynthetic arginine decarboxylase 1 (speA1) (Synechocystis sp. (strain ATCC 27184 / PCC 6803 / Kazusa)).